Consider the following 220-residue polypeptide: Probable cytidylate kinase (220 aa).

10–18 contributes to the ATP binding site; that stretch reads GPAASGKSS.

It belongs to the cytidylate kinase family. Type 1 subfamily.

It carries out the reaction CMP + ATP = CDP + ADP. It catalyses the reaction dCMP + ATP = dCDP + ADP. This chain is Probable cytidylate kinase, found in Encephalitozoon cuniculi (strain GB-M1) (Microsporidian parasite).